The following is a 361-amino-acid chain: Probable dual-specificity RNA methyltransferase RlmN (361 aa).

The active-site Proton acceptor is glutamate 91. In terms of domain architecture, Radical SAM core spans 97 to 329 (QHYGLSVCVT…KKKGVNCVVR (233 aa)). A disulfide bond links cysteine 104 and cysteine 340. The [4Fe-4S] cluster site is built by cysteine 111, cysteine 115, and cysteine 118. S-adenosyl-L-methionine contacts are provided by residues 163-164 (GE), serine 195, 218-220 (SLH), and asparagine 296. Cysteine 340 (S-methylcysteine intermediate) is an active-site residue.

It belongs to the radical SAM superfamily. RlmN family. The cofactor is [4Fe-4S] cluster.

Its subcellular location is the cytoplasm. The catalysed reaction is adenosine(2503) in 23S rRNA + 2 reduced [2Fe-2S]-[ferredoxin] + 2 S-adenosyl-L-methionine = 2-methyladenosine(2503) in 23S rRNA + 5'-deoxyadenosine + L-methionine + 2 oxidized [2Fe-2S]-[ferredoxin] + S-adenosyl-L-homocysteine. It carries out the reaction adenosine(37) in tRNA + 2 reduced [2Fe-2S]-[ferredoxin] + 2 S-adenosyl-L-methionine = 2-methyladenosine(37) in tRNA + 5'-deoxyadenosine + L-methionine + 2 oxidized [2Fe-2S]-[ferredoxin] + S-adenosyl-L-homocysteine. Its function is as follows. Specifically methylates position 2 of adenine 2503 in 23S rRNA and position 2 of adenine 37 in tRNAs. The protein is Probable dual-specificity RNA methyltransferase RlmN of Streptococcus pneumoniae serotype 19F (strain G54).